The sequence spans 775 residues: Chondroitin sulfate synthase 2 (775 aa).

At 1 to 15 (MRASLLLSVLRPAGP) the chain is on the cytoplasmic side. Residues 16–34 (VAVGISLGFTLSLLSVTWV) form a helical; Signal-anchor for type II membrane protein membrane-spanning segment. Residues 35 to 775 (EEPCGPGPPQ…LFEQEQGNST (741 aa)) are Lumenal-facing. The interval 37–100 (PCGPGPPQPG…YHPAQPGQAA (64 aa)) is disordered. The span at 54–66 (GNTNAARRPNSVQ) shows a compositional bias: polar residues. N-linked (GlcNAc...) asparagine glycans are attached at residues N138 and N361. Position 617 (D617) interacts with a divalent metal cation.

The protein belongs to the chondroitin N-acetylgalactosaminyltransferase family. Interacts with PRKN. Requires Mn(2+) as cofactor. Co(2+) serves as cofactor. Ubiquitous. Highly expressed in pancreas, ovary, brain, heart, skeletal muscle, colon, kidney, liver, stomach, spleen and placenta. As to expression, expressed in brain, spleen, ovary, testis, lung and peripheral mononuclear cells. In terms of tissue distribution, also ubiquitous.

The protein localises to the golgi apparatus. It localises to the golgi stack membrane. It is found in the cytoplasm. Its subcellular location is the cytosol. The protein resides in the mitochondrion. The protein localises to the mitochondrion matrix. The catalysed reaction is 3-O-(beta-D-GlcA-(1-&gt;3)-beta-D-GalNAc-(1-&gt;4)-beta-D-GlcA-(1-&gt;3)-beta-D-Gal-(1-&gt;3)-beta-D-Gal-(1-&gt;4)-beta-D-Xyl)-L-seryl-[protein] + UDP-N-acetyl-alpha-D-galactosamine = 3-O-(beta-D-GalNAc-(1-&gt;4)-beta-D-GlcA-(1-&gt;3)-beta-D-GalNAc-(1-&gt;4)-beta-D-GlcA-(1-&gt;3)-beta-D-Gal-(1-&gt;3)-beta-D-Gal-(1-&gt;4)-beta-D-Xyl)-L-seryl-[protein] + UDP + H(+). The enzyme catalyses 3-O-{beta-D-GlcA-(1-&gt;3)-[beta-D-GalNAc-(1-&gt;4)-beta-D-GlcA-(1-&gt;3)](n)-beta-D-GalNAc-(1-&gt;4)-beta-D-GlcA-(1-&gt;3)-beta-D-Gal-(1-&gt;3)-beta-D-Gal-(1-&gt;4)-beta-D-Xyl}-L-seryl-[protein] + UDP-N-acetyl-alpha-D-galactosamine = 3-O-{[beta-D-GalNAc-(1-&gt;4)-beta-D-GlcA-(1-&gt;3)](n+1)-beta-D-GalNAc-(1-&gt;4)-beta-D-GlcA-(1-&gt;3)-beta-D-Gal-(1-&gt;3)-beta-D-Gal-(1-&gt;4)-beta-D-Xyl}-L-seryl-[protein] + UDP + H(+). It carries out the reaction 3-O-(beta-D-GalNAc-(1-&gt;4)-beta-D-GlcA-(1-&gt;3)-beta-D-Gal-(1-&gt;3)-beta-D-Gal-(1-&gt;4)-beta-D-Xyl)-L-seryl-[protein] + UDP-alpha-D-glucuronate = 3-O-(beta-D-GlcA-(1-&gt;3)-beta-D-GalNAc-(1-&gt;4)-beta-D-GlcA-(1-&gt;3)-beta-D-Gal-(1-&gt;3)-beta-D-Gal-(1-&gt;4)-beta-D-Xyl)-L-seryl-[protein] + UDP + H(+). It catalyses the reaction 3-O-{[beta-D-GalNAc-(1-&gt;4)-beta-D-GlcA-(1-&gt;3)](n)-beta-D-GalNAc-(1-&gt;4)-beta-D-GlcA-(1-&gt;3)-beta-D-Gal-(1-&gt;3)-beta-D-Gal-(1-&gt;4)-beta-D-Xyl}-L-seryl-[protein] + UDP-alpha-D-glucuronate = 3-O-{beta-D-GlcA-(1-&gt;3)-[beta-D-GalNAc-(1-&gt;4)-beta-D-GlcA-(1-&gt;3)](n)-beta-D-GalNAc-(1-&gt;4)-beta-D-GlcA-(1-&gt;3)-beta-D-Gal-(1-&gt;3)-beta-D-Gal-(1-&gt;4)-beta-D-Xyl}-L-seryl-[protein] + UDP + H(+). Functionally, has both beta-1,3-glucuronic acid and beta-1,4-N-acetylgalactosamine transferase activity. Transfers glucuronic acid (GlcUA) from UDP-GlcUA and N-acetylgalactosamine (GalNAc) from UDP-GalNAc to the non-reducing end of the elongating chondroitin polymer. Seems to act as a specific activating factor for CHSY1 in chondroitin polymerization. Its function is as follows. May facilitate PRKN transport into the mitochondria. In collaboration with PRKN, may enhance cell viability and protect cells from oxidative stress. The protein is Chondroitin sulfate synthase 2 of Homo sapiens (Human).